The primary structure comprises 382 residues: uncharacterized protein (382 aa).

12 helical membrane-spanning segments follow: residues 14-34, 45-65, 79-99, 102-122, 131-151, 157-177, 204-224, 235-255, 270-290, 291-311, 325-345, and 348-368; these read GLLL…LWLA, VVSS…GYVI, FIFA…SWLA, FVAG…LMCS, LLAA…LLVS, LMSV…PLLF, LGVN…GLMP, ASIG…QWPI, VQVF…AMAP, ALFI…AWAC, ALLL…AMLM, and FSDN…LLML.

Belongs to the major facilitator superfamily. YcaD (TC 2.A.1.26) family.

The protein localises to the cell inner membrane. This is an uncharacterized protein from Shigella dysenteriae serotype 1 (strain Sd197).